We begin with the raw amino-acid sequence, 106 residues long: uncharacterized protein (106 aa).

This is an uncharacterized protein from Invertebrate iridescent virus 3 (IIV-3).